We begin with the raw amino-acid sequence, 122 residues long: Autophagy-related protein 8a (122 aa).

The tract at residues 1–21 is disordered; sequence MAKSSFKISNPLEARMSESSR. Gly-117 carries the Phosphatidylethanolamine amidated glycine lipid modification. Positions 118–122 are cleaved as a propeptide — removed in mature form; the sequence is SLTVA.

The protein belongs to the ATG8 family. In terms of assembly, interacts with ATG4B. Interacts with NBR1. The C-terminal 5 residues are removed by ATG4 to expose Gly-117 at the C-terminus. This Gly-117 forms then a thioester bond with the 'Cys-558' of ATG7 (E1-like activating enzyme) before being transferred to the 'Cys-258' of ATG3 (the specific E2 conjugating enzyme), in order to be finally amidated with phosphatidylethanolamine. This lipid modification anchors ATG8 to autophagosomes. As to expression, constitutively expressed.

The protein resides in the cytoplasmic vesicle. It localises to the autophagosome membrane. The protein localises to the vacuole membrane. Its subcellular location is the cytoplasm. It is found in the cytoskeleton. Functionally, ubiquitin-like modifier involved in autophagosomes formation. May mediate the delivery of the autophagosomes to the vacuole via the microtubule cytoskeleton. This is Autophagy-related protein 8a (ATG8A) from Arabidopsis thaliana (Mouse-ear cress).